A 111-amino-acid chain; its full sequence is Large ribosomal subunit protein uL24 (111 aa).

This sequence belongs to the universal ribosomal protein uL24 family. As to quaternary structure, part of the 50S ribosomal subunit.

In terms of biological role, one of two assembly initiator proteins, it binds directly to the 5'-end of the 23S rRNA, where it nucleates assembly of the 50S subunit. Its function is as follows. One of the proteins that surrounds the polypeptide exit tunnel on the outside of the subunit. The sequence is that of Large ribosomal subunit protein uL24 from Chlamydia muridarum (strain MoPn / Nigg).